The sequence spans 354 residues: Regulatory protein RapD (354 aa).

6 TPR repeats span residues 64-105, 107-126, 130-163, 171-204, 211-244, and 321-353; these read FENQ…VKTA, KHAVHHFKKAEQYLAAIHNT, ADLYYQTAGAYYLMKSPPLSVQYVKKALHIYLHQ, ITCKLLLAVNYIDQERYEKAEQLFKEIIKKTQQL, CHAYYNLGFLKATEKKDQEALLYFRKVLKNQEFE, and IEAWVDLEVLLEDITEYYKKKDDFEKAAFFIMR.

It belongs to the Rap family.

It is found in the cytoplasm. This Bacillus subtilis (strain 168) protein is Regulatory protein RapD (rapD).